The primary structure comprises 778 residues: E3 UFM1-protein ligase 1 homolog (778 aa).

The segment at Asn-404–Arg-477 is disordered. Residues Lys-445–Ala-457 show a composition bias toward basic residues.

The protein belongs to the UFL1 family.

Functionally, E3 UFM1-protein ligase that mediates ufmylation of target proteins. The polypeptide is E3 UFM1-protein ligase 1 homolog (Drosophila virilis (Fruit fly)).